The following is a 445-amino-acid chain: MAAQVASGVGNLNLNSEGGAAAKNRPAQGSPENEARESDGEYDDDQGAPELGNTTAAKKKKKKTKKKKKCTSKVQTEPPRIILSSLFPNNQYPEGEIVEYQNENAYRTTNEEKRHLDRMNNDFLAEYRYAAEVHRQVRQYSQKAIKPGQTLTEIAEGIEESVRALTGHPGLEEGDNLRGGIAFPTGVNLNHCAAHYTPNAGNKMVLQYEDVMKVDFGVHINGRIVDSAFTIAFDPVYDNLLAAVKDATNTGIKQAGIDVRMSDIGAAIQEAMESYEVEIKGTSYPVKAIRNLNGHTIGRYEIHGGKNGKSVPIVKGGDQTKMEEGEVYAIETFGSTGRGYVRDDMETSHYAKIPDAPNVPLRLSSAKNLLNVITKNFGTLPFCRRYLDRLGQDKYLLGLNNLVANGIVDAYPPLCDVKGSYTAQFEHTILLRPNVKEIISRGDDY.

The disordered stretch occupies residues 1–76; sequence MAAQVASGVG…KKKCTSKVQT (76 aa). Residues 57 to 71 are compositionally biased toward basic residues; it reads AKKKKKKTKKKKKCT. Histidine 195 contributes to the substrate binding site. Aspartate 215, aspartate 226, and histidine 295 together coordinate a divalent metal cation. Histidine 303 contacts substrate. Positions 331 and 426 each coordinate a divalent metal cation.

It belongs to the peptidase M24A family. Methionine aminopeptidase eukaryotic type 2 subfamily. Co(2+) serves as cofactor. Zn(2+) is required as a cofactor. Requires Mn(2+) as cofactor. It depends on Fe(2+) as a cofactor.

The protein localises to the cytoplasm. It catalyses the reaction Release of N-terminal amino acids, preferentially methionine, from peptides and arylamides.. Its function is as follows. Cotranslationally removes the N-terminal methionine from nascent proteins. The N-terminal methionine is often cleaved when the second residue in the primary sequence is small and uncharged (Met-Ala-, Cys, Gly, Pro, Ser, Thr, or Val). The polypeptide is Methionine aminopeptidase 2 (Paracoccidioides lutzii (strain ATCC MYA-826 / Pb01) (Paracoccidioides brasiliensis)).